The sequence spans 207 residues: MANVKLFDQTGKEVSSVELNEAIFGIEPNESVVFDVVISQRASLRQGTHAVKNRSAVSGGGRKPWRQKGTGRARQGSIRSPQWRGGGVVFGPTPRSYGYKLPQKVRRLALKSVYSAKVAEDKFVAVENLSFAAPKTAEFASVLSALSIDSKVLVILEEGNEFAALSARNLPNVTVATATTASVLDIVNADKLLVTKEAISTIEGVLA.

Residues 49–78 (HAVKNRSAVSGGGRKPWRQKGTGRARQGSI) form a disordered region.

Belongs to the universal ribosomal protein uL4 family. As to quaternary structure, part of the 50S ribosomal subunit.

One of the primary rRNA binding proteins, this protein initially binds near the 5'-end of the 23S rRNA. It is important during the early stages of 50S assembly. It makes multiple contacts with different domains of the 23S rRNA in the assembled 50S subunit and ribosome. Its function is as follows. Forms part of the polypeptide exit tunnel. The chain is Large ribosomal subunit protein uL4 from Streptococcus agalactiae serotype Ia (strain ATCC 27591 / A909 / CDC SS700).